We begin with the raw amino-acid sequence, 159 residues long: SsrA-binding protein (159 aa).

The segment covering 133-147 (KRQDLAKRDAQREMA) has biased composition (basic and acidic residues). Residues 133-159 (KRQDLAKRDAQREMARAAGRRSKGMDD) are disordered. Over residues 150-159 (AGRRSKGMDD) the composition is skewed to basic residues.

It belongs to the SmpB family.

The protein resides in the cytoplasm. Functionally, required for rescue of stalled ribosomes mediated by trans-translation. Binds to transfer-messenger RNA (tmRNA), required for stable association of tmRNA with ribosomes. tmRNA and SmpB together mimic tRNA shape, replacing the anticodon stem-loop with SmpB. tmRNA is encoded by the ssrA gene; the 2 termini fold to resemble tRNA(Ala) and it encodes a 'tag peptide', a short internal open reading frame. During trans-translation Ala-aminoacylated tmRNA acts like a tRNA, entering the A-site of stalled ribosomes, displacing the stalled mRNA. The ribosome then switches to translate the ORF on the tmRNA; the nascent peptide is terminated with the 'tag peptide' encoded by the tmRNA and targeted for degradation. The ribosome is freed to recommence translation, which seems to be the essential function of trans-translation. The chain is SsrA-binding protein from Salinispora arenicola (strain CNS-205).